Consider the following 463-residue polypeptide: Lactadherin (463 aa).

A signal peptide spans 1-22 (MQVSRVLAALCGMLLCASGLFA). EGF-like domains are found at residues 24-61 (SGDF…LVCN) and 64-108 (ERGP…IHCE). 3 disulfide bridges follow: C28–C39, C33–C49, and C51–C60. A glycan (N-linked (GlcNAc...) asparagine) is linked at N61. Disulfide bonds link C68/C79, C73/C96, C98/C107, C148/C303, C290/C294, and C308/C463. Positions 87-89 (RGD) match the Cell attachment site motif. F5/8 type C domains are found at residues 148–303 (CSTQ…LLGC) and 308–463 (CSEP…LLGC). N266 carries an N-linked (GlcNAc...) asparagine glycan. N-linked (GlcNAc...) asparagine glycosylation is found at N316 and N426.

In terms of processing, N-glycosylated. Isoform 1 also exists in both an O-glycosylated and a non-O-glycosylated form. As to expression, mammary epithelial cell surfaces and spermatozoan. Isoform 2 is present in brain, heart, kidney and spleen and at low levels in lung, liver, small intestine and testis.

It is found in the membrane. It localises to the secreted. Its subcellular location is the cytoplasmic vesicle. The protein resides in the secretory vesicle. The protein localises to the acrosome membrane. Its function is as follows. Contributes to phagocytic removal of apoptotic cells in many tissues. Specific ligand for the alpha-v/beta-3 and alpha-v/beta-5 receptors. Also binds to phosphatidylserine-enriched cell surfaces in a receptor-independent manner. Zona pellucida-binding protein which may play a role in gamete interaction. Plays an important role in the maintenance of intestinal epithelial homeostasis and the promotion of mucosal healing. Promotes VEGF-dependent neovascularization. This Mus musculus (Mouse) protein is Lactadherin (Mfge8).